A 276-amino-acid chain; its full sequence is MTKFRGCIDIHSGQVKQIVGGTLTQDDTTELNHKSTTTENFVSTKPSSYYAELYKNAGINGCHVIKLGSNPENDEAAKLACQSWPNNLQVGGGINGDNALEWLDVHKASHVILTSWLFSDSDEGKEFDWVKLKRVSELVGKSRLIVDLSCRELRVDDKIEWVVAMNKWQTLTNNKLSAEFLGEVSQYCDEFLIHAADVEGLCNGIDVNLVAKLGEWCPEGFEGKIVYAGGARSVKDLDTVSKLSDDKVDLTYGSALDVFGGKLVKFDDLVSWNELH.

It belongs to the HisA/HisF family.

It is found in the cytoplasm. It carries out the reaction 1-(5-phospho-beta-D-ribosyl)-5-[(5-phospho-beta-D-ribosylamino)methylideneamino]imidazole-4-carboxamide = 5-[(5-phospho-1-deoxy-D-ribulos-1-ylimino)methylamino]-1-(5-phospho-beta-D-ribosyl)imidazole-4-carboxamide. The protein operates within amino-acid biosynthesis; L-histidine biosynthesis; L-histidine from 5-phospho-alpha-D-ribose 1-diphosphate: step 4/9. The chain is 1-(5-phosphoribosyl)-5-[(5-phosphoribosylamino)methylideneamino] imidazole-4-carboxamide isomerase (HIS6) from Debaryomyces hansenii (strain ATCC 36239 / CBS 767 / BCRC 21394 / JCM 1990 / NBRC 0083 / IGC 2968) (Yeast).